The primary structure comprises 399 residues: S-adenosylmethionine synthase (399 aa).

ATP is bound at residue 135 to 140 (GEGSTD).

This sequence belongs to the AdoMet synthase 2 family. Requires Mg(2+) as cofactor.

It carries out the reaction L-methionine + ATP + H2O = S-adenosyl-L-methionine + phosphate + diphosphate. The protein operates within amino-acid biosynthesis; S-adenosyl-L-methionine biosynthesis; S-adenosyl-L-methionine from L-methionine: step 1/1. Its function is as follows. Catalyzes the formation of S-adenosylmethionine from methionine and ATP. The chain is S-adenosylmethionine synthase (mat) from Archaeoglobus fulgidus (strain ATCC 49558 / DSM 4304 / JCM 9628 / NBRC 100126 / VC-16).